The sequence spans 137 residues: MQANDSSNKVVYWGTGRRKAAIARVRLVPGQGEVIVNGKPGEIYFNRIANYIQSLKAPLETLGLEGEYNILVNAHGGGLTGQADAVKLGVARALCQLSPENRQPLKAEGYLTRDPRAKERKKYGLHKARKAPQYSKR.

Residues 105 to 137 (LKAEGYLTRDPRAKERKKYGLHKARKAPQYSKR) are disordered. The span at 118–137 (KERKKYGLHKARKAPQYSKR) shows a compositional bias: basic residues.

It belongs to the universal ribosomal protein uS9 family.

This Synechocystis sp. (strain ATCC 27184 / PCC 6803 / Kazusa) protein is Small ribosomal subunit protein uS9 (rpsI).